We begin with the raw amino-acid sequence, 204 residues long: Dephospho-CoA kinase (204 aa).

The DPCK domain maps to 12-204 (RIGVTGGIAS…AWRDQISSIC (193 aa)). 20-25 (ASGKSS) is an ATP binding site.

The protein belongs to the CoaE family.

The protein resides in the cytoplasm. It catalyses the reaction 3'-dephospho-CoA + ATP = ADP + CoA + H(+). It participates in cofactor biosynthesis; coenzyme A biosynthesis; CoA from (R)-pantothenate: step 5/5. Its function is as follows. Catalyzes the phosphorylation of the 3'-hydroxyl group of dephosphocoenzyme A to form coenzyme A. In Prochlorococcus marinus (strain MIT 9313), this protein is Dephospho-CoA kinase.